We begin with the raw amino-acid sequence, 244 residues long: Tetraspanin-2A (244 aa).

Residues 1–22 (MGIGYGASDEQLEKQIGCVKYT) lie on the Cytoplasmic side of the membrane. The chain crosses the membrane as a helical span at residues 23–43 (LFCFNIVAWMISTALFALTVW). At 44–61 (LRAEPGFNDWLRILEAQS) the chain is on the extracellular side. A helical transmembrane segment spans residues 62–82 (FYIGVYVLIGISIVMMAVSFL). Over 83-91 (GCLSALMEN) the chain is Cytoplasmic. Residues 92-112 (TLALFVFVGTQVFGFIAIVAG) traverse the membrane as a helical segment. Residues 113 to 206 (SAVLLQFSTI…TWFFEGKTGW (94 aa)) lie on the Extracellular side of the membrane. A helical membrane pass occupies residues 207 to 227 (IVALAMTLGLLNVICAVMSFV). The Cytoplasmic portion of the chain corresponds to 228-244 (LVQAVKKEEEQASNYRR).

It belongs to the tetraspanin (TM4SF) family. In terms of assembly, forms a complex with Ssk and mesh.

It localises to the apicolateral cell membrane. The protein localises to the cell junction. It is found in the septate junction. Required for assembly of smooth septate junctions (sSJs), together with Ssk and mesh. Important for barrier function of the midgut epithelium. The polypeptide is Tetraspanin-2A (Drosophila melanogaster (Fruit fly)).